The sequence spans 491 residues: uncharacterized protein (491 aa).

Residue 266 to 273 participates in ATP binding; the sequence is GIQGTGKS.

The protein belongs to the AAA ATPase family. Highly divergent.

The protein localises to the plastid. It is found in the chloroplast. This is an uncharacterized protein from Porphyra purpurea (Red seaweed).